The following is a 379-amino-acid chain: Cytochrome b (379 aa).

Transmembrane regions (helical) follow at residues 34 to 54, 78 to 100, 113 to 133, and 179 to 199; these read YGSL…MLAM, WMIR…VHIG, TWNI…LGYV, and FFSL…IHLL. His84 and His98 together coordinate heme b. Heme b-binding residues include His183 and His197. His202 contacts a ubiquinone. The next 4 membrane-spanning stretches (helical) occupy residues 225 to 245, 289 to 309, 320 to 340, and 345 to 365; these read FSIK…FLVL, LGGV…PIFS, WSGM…WIGA, and APYI…FFWM.

This sequence belongs to the cytochrome b family. The main subunits of complex b-c1 are: cytochrome b, cytochrome c1 and the Rieske protein. The cofactor is heme b.

The protein resides in the mitochondrion inner membrane. In terms of biological role, component of the ubiquinol-cytochrome c reductase complex (complex III or cytochrome b-c1 complex) that is part of the mitochondrial respiratory chain. The b-c1 complex mediates electron transfer from ubiquinol to cytochrome c. Contributes to the generation of a proton gradient across the mitochondrial membrane that is then used for ATP synthesis. This chain is Cytochrome b (mt:Cyt-b), found in Epiperipatus biolleyi (Velvet worm).